A 475-amino-acid polypeptide reads, in one-letter code: Probable UDP-N-acetylglucosamine pyrophosphorylase (475 aa).

The Substrate binding motif lies at 103–106 (LAGG). UTP-binding positions include 103–106 (LAGG), Lys117, Gln194, and Gly220. Substrate is bound at residue Asn221. Position 251 (Asp251) interacts with UTP. The short motif at 301–302 (EY) is the Substrate binding element. Lys378 lines the UTP pocket. Ser405 carries the post-translational modification Phosphoserine. Lys410 lines the substrate pocket.

Belongs to the UDPGP type 1 family.

It localises to the cytoplasm. The protein resides in the nucleus. The catalysed reaction is N-acetyl-alpha-D-glucosamine 1-phosphate + UTP + H(+) = UDP-N-acetyl-alpha-D-glucosamine + diphosphate. It functions in the pathway nucleotide-sugar biosynthesis; UDP-N-acetyl-alpha-D-glucosamine biosynthesis; UDP-N-acetyl-alpha-D-glucosamine from N-acetyl-alpha-D-glucosamine 1-phosphate: step 1/1. This is Probable UDP-N-acetylglucosamine pyrophosphorylase (uap1) from Schizosaccharomyces pombe (strain 972 / ATCC 24843) (Fission yeast).